The following is a 276-amino-acid chain: Formamidopyrimidine-DNA glycosylase (276 aa).

Pro-2 functions as the Schiff-base intermediate with DNA in the catalytic mechanism. Glu-3 functions as the Proton donor in the catalytic mechanism. Lys-60 serves as the catalytic Proton donor; for beta-elimination activity. Arg-113 and Arg-152 together coordinate DNA. Residues 241 to 275 form an FPG-type zinc finger; the sequence is NVFRKTGHPCPRCGHLIEKLIVAQRSTHICPICQK. Arg-265 (proton donor; for delta-elimination activity) is an active-site residue.

The protein belongs to the FPG family. In terms of assembly, monomer. It depends on Zn(2+) as a cofactor.

The enzyme catalyses Hydrolysis of DNA containing ring-opened 7-methylguanine residues, releasing 2,6-diamino-4-hydroxy-5-(N-methyl)formamidopyrimidine.. It catalyses the reaction 2'-deoxyribonucleotide-(2'-deoxyribose 5'-phosphate)-2'-deoxyribonucleotide-DNA = a 3'-end 2'-deoxyribonucleotide-(2,3-dehydro-2,3-deoxyribose 5'-phosphate)-DNA + a 5'-end 5'-phospho-2'-deoxyribonucleoside-DNA + H(+). Functionally, involved in base excision repair of DNA damaged by oxidation or by mutagenic agents. Acts as a DNA glycosylase that recognizes and removes damaged bases. Has a preference for oxidized purines, such as 7,8-dihydro-8-oxoguanine (8-oxoG). Has AP (apurinic/apyrimidinic) lyase activity and introduces nicks in the DNA strand. Cleaves the DNA backbone by beta-delta elimination to generate a single-strand break at the site of the removed base with both 3'- and 5'-phosphates. The chain is Formamidopyrimidine-DNA glycosylase from Protochlamydia amoebophila (strain UWE25).